The primary structure comprises 305 residues: Glycine--tRNA ligase alpha subunit (305 aa).

The protein belongs to the class-II aminoacyl-tRNA synthetase family. As to quaternary structure, tetramer of two alpha and two beta subunits.

It localises to the cytoplasm. The catalysed reaction is tRNA(Gly) + glycine + ATP = glycyl-tRNA(Gly) + AMP + diphosphate. The protein is Glycine--tRNA ligase alpha subunit of Vibrio parahaemolyticus serotype O3:K6 (strain RIMD 2210633).